Reading from the N-terminus, the 478-residue chain is Sugar transporter ERD6-like 18 (478 aa).

Helical transmembrane passes span 31 to 51 (ITACVILSTFIAVCGSFSFGV), 71 to 91 (IAQFSAFASLSTLGAAIGALF), 110 to 130 (LLCIIGWFSIAFAKDVMWLNF), 133 to 153 (ISSGIGLGLISYVVPVYIAEI), 162 to 180 (FTFTNQLLQNSGLAMVYFS), 188 to 208 (ILALLGALPCFIQVIGLFFVP), 270 to 290 (TLVVGIGLMLIQQFSGSSAVL), 306 to 326 (IGSTLLGLFMIPKAMIGVILV), 333 to 353 (PLLLTSVSGMCITSMLIGVAF), 367 to 387 (VFTFICVTLYIGTYAIGLGGL), 407 to 427 (IVTLVSWSSSSIVTYAFNFLL), and 433 to 453 (GTFYVFGAVGGLALLFIWLLV).

This sequence belongs to the major facilitator superfamily. Sugar transporter (TC 2.A.1.1) family. In terms of tissue distribution, expressed in leaf vasculature, stem and flowers.

It localises to the membrane. Functionally, sugar transporter. The sequence is that of Sugar transporter ERD6-like 18 (SFP2) from Arabidopsis thaliana (Mouse-ear cress).